The primary structure comprises 867 residues: Armadillo repeat-containing protein 2 (867 aa).

Disordered regions lie at residues 1–115 (MLSP…CFSF) and 214–252 (TSLP…AVPK). Polar residues-rich tracts occupy residues 18–28 (PSVSKQKTSAE), 40–50 (VRTQRPFTPQE), and 60–69 (SSRTSENRPP). Low complexity-rich tracts occupy residues 70–81 (SSFSLHASSFES) and 234–243 (SSCPSSSDLS). 12 ARM repeats span residues 262–301 (IEVD…HALE), 304–344 (NMLG…ALKV), 363–403 (EKND…SIKF), 408–449 (LGFL…HLLV), 462–503 (SLVR…KLTS), 506–547 (DCCT…NLTA), 551–589 (QARE…QRGE), 591–616 (HRAQ…NIAI), 619–662 (GVGP…NLSY), 664–705 (QVKN…NLSQ), 707–746 (HDVC…NLTV), and 748–790 (KDKR…NFSE).

In terms of tissue distribution, expressed at higher level in testis.

Its function is as follows. Required for sperm flagellum axoneme organization and function. Involved in axonemal central pair complex assembly and/or stability. The polypeptide is Armadillo repeat-containing protein 2 (Homo sapiens (Human)).